The chain runs to 388 residues: Succinate--CoA ligase [ADP-forming] subunit beta (388 aa).

The ATP-grasp domain maps to 9-244; it reads KQLFARYGLP…PSQEDPREAQ (236 aa). Residues K46, 53-55, E99, T102, and E107 contribute to the ATP site; that span reads GRG. Positions 199 and 213 each coordinate Mg(2+). Residues N264 and 321–323 each bind substrate; that span reads GIV.

It belongs to the succinate/malate CoA ligase beta subunit family. In terms of assembly, heterotetramer of two alpha and two beta subunits. Mg(2+) is required as a cofactor.

The catalysed reaction is succinate + ATP + CoA = succinyl-CoA + ADP + phosphate. The enzyme catalyses GTP + succinate + CoA = succinyl-CoA + GDP + phosphate. It functions in the pathway carbohydrate metabolism; tricarboxylic acid cycle; succinate from succinyl-CoA (ligase route): step 1/1. Its function is as follows. Succinyl-CoA synthetase functions in the citric acid cycle (TCA), coupling the hydrolysis of succinyl-CoA to the synthesis of either ATP or GTP and thus represents the only step of substrate-level phosphorylation in the TCA. The beta subunit provides nucleotide specificity of the enzyme and binds the substrate succinate, while the binding sites for coenzyme A and phosphate are found in the alpha subunit. This is Succinate--CoA ligase [ADP-forming] subunit beta from Photorhabdus laumondii subsp. laumondii (strain DSM 15139 / CIP 105565 / TT01) (Photorhabdus luminescens subsp. laumondii).